The primary structure comprises 379 residues: Chaperone protein DnaJ (379 aa).

Residues 5-70 (DFYEVLGVSR…QKRSAYDQYG (66 aa)) form the J domain. The CR-type zinc-finger motif lies at 134–212 (GCDKEIEVPT…CHGEGRVHKT (79 aa)). Cysteine 147, cysteine 150, cysteine 164, cysteine 167, cysteine 186, cysteine 189, cysteine 200, and cysteine 203 together coordinate Zn(2+). CXXCXGXG motif repeat units follow at residues 147-154 (CDPCEGTG), 164-171 (CSTCHGQG), 186-193 (CPTCHGKG), and 200-207 (CNSCHGEG).

It belongs to the DnaJ family. In terms of assembly, homodimer. The cofactor is Zn(2+).

It is found in the cytoplasm. Functionally, participates actively in the response to hyperosmotic and heat shock by preventing the aggregation of stress-denatured proteins and by disaggregating proteins, also in an autonomous, DnaK-independent fashion. Unfolded proteins bind initially to DnaJ; upon interaction with the DnaJ-bound protein, DnaK hydrolyzes its bound ATP, resulting in the formation of a stable complex. GrpE releases ADP from DnaK; ATP binding to DnaK triggers the release of the substrate protein, thus completing the reaction cycle. Several rounds of ATP-dependent interactions between DnaJ, DnaK and GrpE are required for fully efficient folding. Also involved, together with DnaK and GrpE, in the DNA replication of plasmids through activation of initiation proteins. This Aliivibrio fischeri (strain ATCC 700601 / ES114) (Vibrio fischeri) protein is Chaperone protein DnaJ.